A 170-amino-acid polypeptide reads, in one-letter code: Large ribosomal subunit protein uL11 (170 aa).

Belongs to the universal ribosomal protein uL11 family. In terms of assembly, part of the ribosomal stalk of the 50S ribosomal subunit. Interacts with L10 and the large rRNA to form the base of the stalk. L10 forms an elongated spine to which L12 dimers bind in a sequential fashion forming a multimeric L10(L12)X complex.

Functionally, forms part of the ribosomal stalk which helps the ribosome interact with GTP-bound translation factors. The chain is Large ribosomal subunit protein uL11 from Saccharolobus solfataricus (strain ATCC 35092 / DSM 1617 / JCM 11322 / P2) (Sulfolobus solfataricus).